Reading from the N-terminus, the 170-residue chain is Large ribosomal subunit protein uL10 (170 aa).

It belongs to the universal ribosomal protein uL10 family. Part of the ribosomal stalk of the 50S ribosomal subunit. The N-terminus interacts with L11 and the large rRNA to form the base of the stalk. The C-terminus forms an elongated spine to which L12 dimers bind in a sequential fashion forming a multimeric L10(L12)X complex.

Its function is as follows. Forms part of the ribosomal stalk, playing a central role in the interaction of the ribosome with GTP-bound translation factors. The sequence is that of Large ribosomal subunit protein uL10 from Lactobacillus helveticus (strain DPC 4571).